Consider the following 197-residue polypeptide: Nucleoid occlusion factor SlmA (197 aa).

The HTH tetR-type domain maps to 6–66 (NDRRTQILQA…GLIEFIEESL (61 aa)). Positions 29-48 (TTAALAKQVGVSEAALYRHF) form a DNA-binding region, H-T-H motif.

Belongs to the nucleoid occlusion factor SlmA family. Homodimer. Interacts with FtsZ.

The protein localises to the cytoplasm. It is found in the nucleoid. In terms of biological role, required for nucleoid occlusion (NO) phenomenon, which prevents Z-ring formation and cell division over the nucleoid. Acts as a DNA-associated cell division inhibitor that binds simultaneously chromosomal DNA and FtsZ, and disrupts the assembly of FtsZ polymers. SlmA-DNA-binding sequences (SBS) are dispersed on non-Ter regions of the chromosome, preventing FtsZ polymerization at these regions. The polypeptide is Nucleoid occlusion factor SlmA (Marinomonas sp. (strain MWYL1)).